Here is a 323-residue protein sequence, read N- to C-terminus: MDSKHQCVKLNDGHFMPVLGFGTYAPPEVPRSKALEVTKLAIEAGFRHIDSAHLYNNEEQVGLAIRSKIADGSVKREDIFYTSKLWSTFHRPELVRPALENSLKKAQLDYVDLYLIHSPMSLKPGEELSPTDENGKVIFDIVDLCTTWEAMEKCKDAGLAKSIGVSNFNRRQLEMILNKPGLKYKPVCNQVECHPYFNRSKLLDFCKSKDIVLVAYSALGSQRDKRWVDPNSPVLLEDPVLCALAKKHKRTPALIALRYQLQRGVVVLAKSYNEQRIRQNVQVFEFQLTAEDMKAIDGLDRNLHYFNSDSFASHPNYPYSDEY.

NADP(+) is bound by residues 23–24 (TY) and D50. The active-site Proton donor is Y55. H117 serves as a coordination point for substrate. NADP(+)-binding positions include 166–167 (SN), Q190, 216–222 (YSALGSQ), 270–272 (KSY), and 276–280 (RIRQN).

It belongs to the aldo/keto reductase family. As to expression, expressed in many tissues including adrenal gland, brain, kidney, liver, lung, mammary gland, placenta, small intestine, colon, spleen, prostate and testis. High expression in prostate and mammary gland. In the prostate, higher levels in epithelial cells than in stromal cells. In the brain, expressed in medulla, spinal cord, frontotemporal lobes, thalamus, subthalamic nuclei and amygdala. Weaker expression in the hippocampus, substantia nigra and caudate.

The protein localises to the cytoplasm. The catalysed reaction is a 3alpha-hydroxysteroid + NADP(+) = a 3-oxosteroid + NADPH + H(+). The enzyme catalyses a 3alpha-hydroxysteroid + NAD(+) = a 3-oxosteroid + NADH + H(+). It carries out the reaction prostaglandin F2alpha + NADP(+) = prostaglandin D2 + NADPH + H(+). It catalyses the reaction prostaglandin F2alpha + NADP(+) = prostaglandin H2 + NADPH + H(+). The catalysed reaction is prostaglandin D2 + NADPH + H(+) = 11beta-prostaglandin F2 + NADP(+). The enzyme catalyses prostaglandin D2-ethanolamide + NADPH + H(+) = 11beta-prostaglandin F2-ethanolamide + NADP(+). It carries out the reaction testosterone + NAD(+) = androst-4-ene-3,17-dione + NADH + H(+). It catalyses the reaction testosterone + NADP(+) = androst-4-ene-3,17-dione + NADPH + H(+). The catalysed reaction is 17beta-estradiol + NADP(+) = estrone + NADPH + H(+). The enzyme catalyses 17beta-estradiol + NAD(+) = estrone + NADH + H(+). It carries out the reaction (20S)-hydroxypregn-4-en-3-one + NADP(+) = progesterone + NADPH + H(+). It catalyses the reaction (20S)-hydroxypregn-4-en-3-one + NAD(+) = progesterone + NADH + H(+). The catalysed reaction is 5alpha-androstane-3alpha,17beta-diol + NADP(+) = 17beta-hydroxy-5alpha-androstan-3-one + NADPH + H(+). The enzyme catalyses 5alpha-androstane-3alpha,17beta-diol + NAD(+) = 17beta-hydroxy-5alpha-androstan-3-one + NADH + H(+). It carries out the reaction androsterone + NADPH + H(+) = 5alpha-androstane-3alpha,17beta-diol + NADP(+). It catalyses the reaction 5alpha-androstane-3alpha,17beta-diol + NAD(+) = androsterone + NADH + H(+). The catalysed reaction is 5alpha-androstane-3beta,17beta-diol + NADP(+) = 17beta-hydroxy-5alpha-androstan-3-one + NADPH + H(+). The enzyme catalyses 9-cis-retinol + NADP(+) = 9-cis-retinal + NADPH + H(+). Its pathway is steroid metabolism. Its activity is regulated as follows. Strongly inhibited by nonsteroidal anti-inflammatory drugs (NSAID) including flufenamic acid and indomethacin. Also inhibited by the flavinoid, rutin, and by selective serotonin inhibitors (SSRIs). The oxidation reaction is inhibited by low micromolar concentrations of NADPH. Its function is as follows. Cytosolic aldo-keto reductase that catalyzes the NADH and NADPH-dependent reduction of ketosteroids to hydroxysteroids. Acts as a NAD(P)(H)-dependent 3-, 17- and 20-ketosteroid reductase on the steroid nucleus and side chain and regulates the metabolism of androgens, estrogens and progesterone. Displays the ability to catalyze both oxidation and reduction in vitro, but most probably acts as a reductase in vivo since the oxidase activity measured in vitro is inhibited by physiological concentration of NADPH. Acts preferentially as a 17-ketosteroid reductase and has the highest catalytic efficiency of the AKR1C enzyme for the reduction of delta4-androstenedione to form testosterone. Reduces prostaglandin (PG) D2 to 11beta-prostaglandin F2, progesterone to 20alpha-hydroxyprogesterone and estrone to 17beta-estradiol. Catalyzes the transformation of the potent androgen dihydrotestosterone (DHT) into the less active form, 5-alpha-androstan-3-alpha,17-beta-diol (3-alpha-diol). Also displays retinaldehyde reductase activity toward 9-cis-retinal. The chain is Aldo-keto reductase family 1 member C3 (AKR1C3) from Homo sapiens (Human).